A 644-amino-acid polypeptide reads, in one-letter code: Chaperone protein DnaK (644 aa).

At Thr199 the chain carries Phosphothreonine; by autocatalysis. A compositionally biased stretch (basic and acidic residues) spans 550-584 (ADKLDESEKQRAQDEIKRGREAMESGDLERMKASR). Disordered stretches follow at residues 550–586 (ADKLDESEKQRAQDEIKRGREAMESGDLERMKASRDS) and 599–644 (YSQA…EDKK). The segment covering 600 to 623 (SQAGPEQGAPGAEAGAGASQGASG) has biased composition (low complexity).

Belongs to the heat shock protein 70 family.

Functionally, acts as a chaperone. This is Chaperone protein DnaK from Leptospira biflexa serovar Patoc (strain Patoc 1 / Ames).